We begin with the raw amino-acid sequence, 397 residues long: Lysophospholipid transporter LplT (397 aa).

Helical transmembrane passes span 21-41 (SAQFLSAFGDNALLFATLALL), 53-73 (ILQMVFVGAYILFAPFVGQVA), 91-111 (LGAASICFGFNPFIGYTLVGI), 139-159 (LMESSTIAAILLGSVAGGVLA), 164-184 (LAALGICAVVYAGAVVANLFI), 229-249 (WGAGVTLRFLLVLWVPTALGI), 257-277 (YLNAMVAVGIVVGAGAAAKLV), 281-301 (TVRRCMPAGILIGVGVLFFSL), 304-324 (ALLPAYGLLILIGILGGFFIV), 344-364 (IAVQNLGENTAMLLMLGLYSL), and 372-392 (VVGIGVGFGALFALAITGLWI).

This sequence belongs to the major facilitator superfamily. LplT (TC 2.A.1.42) family.

It is found in the cell inner membrane. In terms of biological role, catalyzes the facilitated diffusion of 2-acyl-glycero-3-phosphoethanolamine (2-acyl-GPE) into the cell. The protein is Lysophospholipid transporter LplT of Enterobacter sp. (strain 638).